Reading from the N-terminus, the 157-residue chain is Endoribonuclease YbeY (157 aa).

Residues histidine 116, histidine 120, and histidine 126 each coordinate Zn(2+).

The protein belongs to the endoribonuclease YbeY family. Zn(2+) serves as cofactor.

Its subcellular location is the cytoplasm. Its function is as follows. Single strand-specific metallo-endoribonuclease involved in late-stage 70S ribosome quality control and in maturation of the 3' terminus of the 16S rRNA. This chain is Endoribonuclease YbeY, found in Paenarthrobacter aurescens (strain TC1).